A 413-amino-acid chain; its full sequence is Gamma-glutamyl phosphate reductase (413 aa).

The protein belongs to the gamma-glutamyl phosphate reductase family.

It is found in the cytoplasm. It catalyses the reaction L-glutamate 5-semialdehyde + phosphate + NADP(+) = L-glutamyl 5-phosphate + NADPH + H(+). Its pathway is amino-acid biosynthesis; L-proline biosynthesis; L-glutamate 5-semialdehyde from L-glutamate: step 2/2. Its function is as follows. Catalyzes the NADPH-dependent reduction of L-glutamate 5-phosphate into L-glutamate 5-semialdehyde and phosphate. The product spontaneously undergoes cyclization to form 1-pyrroline-5-carboxylate. This is Gamma-glutamyl phosphate reductase from Salinispora arenicola (strain CNS-205).